The chain runs to 140 residues: Histone H2B (140 aa).

The segment covering 1–10 (MPPKAAEKKP) has biased composition (basic and acidic residues). The interval 1–48 (MPPKAAEKKPSTGGKAPAGKAPAEKKEAGKKTAAAATGDKKKRGKTRK) is disordered. 2 positions are modified to N6-acetyllysine; alternate: Lys-8 and Lys-9. Glycyl lysine isopeptide (Lys-Gly) (interchain with G-Cter in SUMO); alternate cross-links involve residues Lys-8 and Lys-9. A compositionally biased stretch (low complexity) spans 11-21 (STGGKAPAGKA). Residue Lys-15 is modified to N6-acetyllysine. At Lys-25 the chain carries N6-acetyllysine; alternate. Lys-25 is covalently cross-linked (Glycyl lysine isopeptide (Lys-Gly) (interchain with G-Cter in SUMO); alternate). Lys-26 participates in a covalent cross-link: Glycyl lysine isopeptide (Lys-Gly) (interchain with G-Cter in SUMO). Residue Lys-134 forms a Glycyl lysine isopeptide (Lys-Gly) (interchain with G-Cter in ubiquitin) linkage.

Belongs to the histone H2B family. As to quaternary structure, the nucleosome is a histone octamer containing two molecules each of H2A, H2B, H3 and H4 assembled in one H3-H4 heterotetramer and two H2A-H2B heterodimers. The octamer wraps approximately 147 bp of DNA. In terms of processing, monoubiquitinated by the ubc2-bre1 complex to form H2BK123ub1. H2BK123ub1 gives a specific tag for epigenetic transcriptional activation and is also prerequisite for H3K4me and H3K79me formation. H2BK123ub1 also modulates the formation of double-strand breaks during meiosis and is a prerequisite for DNA-damage checkpoint activation. Post-translationally, acetylated by gcn5 to form H2BK11ac and H2BK16ac. H2BK16ac can also be formed by esa1. Acetylation of N-terminal lysines and particularly formation of H2BK11acK16ac has a positive effect on transcription. Sumoylation to form H2BK6su or H2BK7su, and probably also H2BK16su or H2BK17su, occurs preferentially near the telomeres and represses gene transcription.

Its subcellular location is the nucleus. It is found in the chromosome. In terms of biological role, core component of nucleosome. Nucleosomes wrap and compact DNA into chromatin, limiting DNA accessibility to the cellular machineries which require DNA as a template. Histones thereby play a central role in transcription regulation, DNA repair, DNA replication and chromosomal stability. DNA accessibility is regulated via a complex set of post-translational modifications of histones, also called histone code, and nucleosome remodeling. The protein is Histone H2B (htb1) of Neosartorya fischeri (strain ATCC 1020 / DSM 3700 / CBS 544.65 / FGSC A1164 / JCM 1740 / NRRL 181 / WB 181) (Aspergillus fischerianus).